A 920-amino-acid chain; its full sequence is Chitin synthase C (920 aa).

Disordered regions lie at residues Met-1–Gln-41 and Ile-140–Pro-173. Residues Tyr-154 to Gln-163 are compositionally biased toward acidic residues. A run of 5 helical transmembrane segments spans residues Ser-466–Leu-486, Arg-564–Trp-584, Leu-608–Leu-628, Val-640–Ala-660, and Met-675–Val-695. An N-linked (GlcNAc...) asparagine glycan is attached at Asn-715. Transmembrane regions (helical) follow at residues Phe-718–Ile-738, Phe-749–Cys-769, Ala-847–Ala-867, and Val-892–Leu-912.

This sequence belongs to the chitin synthase family. Class I subfamily.

It localises to the cell membrane. The catalysed reaction is [(1-&gt;4)-N-acetyl-beta-D-glucosaminyl](n) + UDP-N-acetyl-alpha-D-glucosamine = [(1-&gt;4)-N-acetyl-beta-D-glucosaminyl](n+1) + UDP + H(+). Its function is as follows. Polymerizes chitin, a structural polymer of the cell wall and septum, by transferring the sugar moiety of UDP-GlcNAc to the non-reducing end of the growing chitin polymer. Involved in hyphal growth. This Aspergillus oryzae (strain ATCC 42149 / RIB 40) (Yellow koji mold) protein is Chitin synthase C.